Here is a 254-residue protein sequence, read N- to C-terminus: UstYa family oxidase phomYc' (254 aa).

A helical transmembrane segment spans residues 38–58 (LVLVLQSVLIISLLASLHILG). N64 carries an N-linked (GlcNAc...) asparagine glycan. Residues 138–142 (HQLHC) carry the HXXHC 1 motif. N159 carries an N-linked (GlcNAc...) asparagine glycan. The HXXHC 2 motif lies at 173-177 (HIDHC).

The protein belongs to the ustYa family.

Its subcellular location is the membrane. It functions in the pathway mycotoxin biosynthesis. Its function is as follows. UstYa family oxidase; part of the gene cluster that mediates the biosynthesis of the phomopsins, a group of hexapeptide mycotoxins which infects lupins and causes lupinosis disease in livestock. Within the pathway, phomYc' catalyzes the desaturation of the Ile moiety into 2,3-dehydroisoleucine (dIle). The pathway starts with the processing of the precursor phomA' by several endopeptidases including kexin proteases as well as the cluster-specific S41 family peptidase phomP1 and the oligopeptidase phomG' to produce 10 identical copies of the hexapeptide Tyr-Val-Ile-Pro-Ile-Asp. After being excised from the precursor peptide, the core peptides are cyclized and modified post-translationally by enzymes encoded within the gene cluster. The timing and order of proteolysis of the phomA' precursor and PTMs are still unknown. Two tyrosinase-like enzymes, phomQ1' and phomQ2, catalyze the chlorination and hydroxylation of Tyr, respectively. PhomYb, is proposed to be involved in the construction of the macrocyclic structure. The other 4 ustYa family proteins may be involved in PTMs that generate the unique structure of phomopsin A. PhomYa' is required for the hydroxylation of C-beta of Tyr. PhomYc', phomYd', and phomYe are responsible for the biosynthesis of 2,3-dehydroisoleucine (dIle), 2,3-dehydroaspartic acid (dAsp), and 3,4-dehydroproline (dPro), respectively. While dIle formation by phomYc' is indispensable for the installation of dAsp by phomYd', the order of the other PTMs have not been elucidated yet. Most of the biosynthetic enzymes likely have broad substrate specificity, and thus, there might be a metabolic grid from a precursor to phomopsin A. The enzyme(s) responsible for the biosynthesis of 3,4-dehydrovaline (dVal) have also not been identified yet. Finally, phomM' acts as an S-adenosylmethionine-dependent alpha-N-methyltransferase that catalyzes two successive N-methylation reactions, converting N-desmethyl-phomopsin A to phomopsin A and phomopsin A further to an N,N-dimethylated congener called phomopsin E. The chain is UstYa family oxidase phomYc' from Diaporthe leptostromiformis (Lupinosis disease fungus).